The primary structure comprises 118 residues: Large ribosomal subunit protein uL18 (118 aa).

It belongs to the universal ribosomal protein uL18 family. In terms of assembly, part of the 50S ribosomal subunit; part of the 5S rRNA/L5/L18/L25 subcomplex. Contacts the 5S and 23S rRNAs.

Functionally, this is one of the proteins that bind and probably mediate the attachment of the 5S RNA into the large ribosomal subunit, where it forms part of the central protuberance. The protein is Large ribosomal subunit protein uL18 of Helicobacter pylori (strain P12).